A 545-amino-acid polypeptide reads, in one-letter code: Esterase-5C (545 aa).

A signal peptide spans 1–19 (MLAARLIILLSFYWLSASA). A disulfide bridge links C84 with C103. Residue N113 is glycosylated (N-linked (GlcNAc...) asparagine). S207 acts as the Acyl-ester intermediate in catalysis. C259 and C271 are joined by a disulfide. Residue N421 is glycosylated (N-linked (GlcNAc...) asparagine). Catalysis depends on H467, which acts as the Charge relay system. Residue N507 is glycosylated (N-linked (GlcNAc...) asparagine). The cysteines at positions 515 and 536 are disulfide-linked.

This sequence belongs to the type-B carboxylesterase/lipase family.

It localises to the secreted. The enzyme catalyses a carboxylic ester + H2O = an alcohol + a carboxylate + H(+). The chain is Esterase-5C (Est-5C) from Drosophila pseudoobscura pseudoobscura (Fruit fly).